Consider the following 407-residue polypeptide: Cathepsin D (407 aa).

The first 20 residues, 1-20 (MQTPGVLLLILGLLDASSSA), serve as a signal peptide directing secretion. Positions 21-64 (LIRIPLRKFTSIRRTMTEVGGSVEDLILKGPITKYSMQSSPRTK) are cleaved as a propeptide — activation peptide. Positions 79–402 (YYGEIGIGTP…DREYNRVGFA (324 aa)) constitute a Peptidase A1 domain. 2 disulfides stabilise this stretch: cysteine 91–cysteine 160 and cysteine 110–cysteine 117. The active site involves aspartate 97. 2 N-linked (GlcNAc...) asparagine glycosylation sites follow: asparagine 134 and asparagine 258. Cysteines 281 and 285 form a disulfide. Aspartate 290 is an active-site residue. Cysteines 324 and 361 form a disulfide.

The protein belongs to the peptidase A1 family. Occurs as a mixture of both a single chain form and two types of two chain (light and heavy) forms. Interacts with ADAM30; this leads to activation of CTSD. N- and O-glycosylated. In terms of processing, undergoes proteolytic cleavage and activation by ADAM30.

Its subcellular location is the lysosome. It is found in the melanosome. The protein localises to the secreted. It localises to the extracellular space. It catalyses the reaction Specificity similar to, but narrower than, that of pepsin A. Does not cleave the 4-Gln-|-His-5 bond in B chain of insulin.. In terms of biological role, acid protease active in intracellular protein breakdown. Plays a role in APP processing following cleavage and activation by ADAM30 which leads to APP degradation. The protein is Cathepsin D (Ctsd) of Rattus norvegicus (Rat).